A 441-amino-acid chain; its full sequence is GTPase Der (441 aa).

EngA-type G domains lie at 4 to 169 and 178 to 353; these read PVVA…PEDI and IKVA…DQAA. Residues 10–17, 57–61, 120–123, 184–191, 231–235, and 296–299 contribute to the GTP site; these read GRPNVGKS, DTGGI, NKVD, GKPNAGKS, DTAGI, and NKWD. A KH-like domain is found at 354–438; sequence FRISTGMLND…PIRFIHRQRE (85 aa).

This sequence belongs to the TRAFAC class TrmE-Era-EngA-EngB-Septin-like GTPase superfamily. EngA (Der) GTPase family. As to quaternary structure, associates with the 50S ribosomal subunit.

GTPase that plays an essential role in the late steps of ribosome biogenesis. This is GTPase Der from Ruminiclostridium cellulolyticum (strain ATCC 35319 / DSM 5812 / JCM 6584 / H10) (Clostridium cellulolyticum).